The primary structure comprises 724 residues: NAD(+) hydrolase SARM1 (724 aa).

A mitochondrion-targeting transit peptide spans methionine 1 to arginine 27. The ARM 1 repeat unit spans residues glutamate 60–glutamate 100. Residues tryptophan 103, arginine 110, glutamate 149–arginine 157, and histidine 190–lysine 193 contribute to the NAD(+) site. ARM repeat units follow at residues glutamine 114 to valine 153, glutamate 155 to lysine 193, glutamate 196 to leucine 235, glycine 237 to asparagine 280, lysine 281 to aspartate 314, alanine 315 to alanine 354, and glutamine 359 to proline 402. SAM domains lie at tryptophan 412–phenylalanine 476 and asparagine 486–serine 548. Phosphoserine occurs at positions 548 and 558. The TIR domain maps to aspartate 560 to serine 703. NAD(+) contacts are provided by residues arginine 569–arginine 570 and glutamate 599. The active site involves glutamate 642. The disordered stretch occupies residues serine 704–threonine 724.

The protein belongs to the SARM1 family. As to quaternary structure, homooctamer; forms an octameric ring via SAM domains. Interacts with TICAM1/TRIF and thereby interferes with TICAM1/TRIF function. Interacts with MAPK10/JNK3 and SDC2 (via cytoplasmic domain). In terms of processing, phosphorylation at Ser-548 by JNK kinases (MAPK8, MAPK9 and /or MAPK10) enhance the NAD(+) hydrolase (NADase) activity. Phosphorylation at Ser-548 and subsequent activation takes place in response to oxidative stress conditions and inhibits mitochondrial respiration. As to expression, predominantly expressed in brain, kidney and liver. Expressed at lower level in placenta.

It is found in the cytoplasm. The protein resides in the cell projection. It localises to the axon. The protein localises to the dendrite. Its subcellular location is the synapse. It is found in the mitochondrion. The enzyme catalyses NAD(+) + H2O = ADP-D-ribose + nicotinamide + H(+). It carries out the reaction NAD(+) = cyclic ADP-beta-D-ribose + nicotinamide + H(+). It catalyses the reaction NADP(+) + H2O = ADP-D-ribose 2'-phosphate + nicotinamide + H(+). Autoinhibited: in the inactive state, the enzymatic TIR domain is held apart by the autoinhibiting ARM repeats. NAD(+)-binding to ARM repeats maintains an inactive state by promoting interaction between ARM repeats and the TIR domain, thereby facilitating inhibition of the enzymatic TIR domain. Following activation, possibly by nicotinamide mononucleotide (NMN), auto-inhibitory interactions are released, allowing self-association of the TIR domains and subsequent activation of the NAD(+) hydrolase (NADase) activity. Self-association of TIR domains is facilitated by the octamer of SAM domains. NAD(+) hydrolase activity is inhibited by nicotinamide. Specifically inhibited by berberine chloride and zinc chloride. Its function is as follows. NAD(+) hydrolase, which plays a key role in axonal degeneration following injury by regulating NAD(+) metabolism. Acts as a negative regulator of MYD88- and TRIF-dependent toll-like receptor signaling pathway by promoting Wallerian degeneration, an injury-induced form of programmed subcellular death which involves degeneration of an axon distal to the injury site. Wallerian degeneration is triggered by NAD(+) depletion: in response to injury, SARM1 is activated and catalyzes cleavage of NAD(+) into ADP-D-ribose (ADPR), cyclic ADPR (cADPR) and nicotinamide; NAD(+) cleavage promoting cytoskeletal degradation and axon destruction. Also able to hydrolyze NADP(+), but not other NAD(+)-related molecules. Can activate neuronal cell death in response to stress. Regulates dendritic arborization through the MAPK4-JNK pathway. Involved in innate immune response: inhibits both TICAM1/TRIF- and MYD88-dependent activation of JUN/AP-1, TRIF-dependent activation of NF-kappa-B and IRF3, and the phosphorylation of MAPK14/p38. The protein is NAD(+) hydrolase SARM1 of Homo sapiens (Human).